The sequence spans 396 residues: DNA polymerase IV (396 aa).

Residues 6–186 (IIHVDMDAFY…LPISRLWGVG (181 aa)) enclose the UmuC domain. D10 and D104 together coordinate Mg(2+). The active site involves E105.

Belongs to the DNA polymerase type-Y family. Monomer. The cofactor is Mg(2+).

The protein localises to the cytoplasm. It catalyses the reaction DNA(n) + a 2'-deoxyribonucleoside 5'-triphosphate = DNA(n+1) + diphosphate. Poorly processive, error-prone DNA polymerase involved in untargeted mutagenesis. Copies undamaged DNA at stalled replication forks, which arise in vivo from mismatched or misaligned primer ends. These misaligned primers can be extended by PolIV. Exhibits no 3'-5' exonuclease (proofreading) activity. May be involved in translesional synthesis, in conjunction with the beta clamp from PolIII. In Desulfatibacillum aliphaticivorans, this protein is DNA polymerase IV.